Reading from the N-terminus, the 105-residue chain is MTGYRVIHLTGIYYTFYRRKSFFFFFLEYLHNSLRVLSWKGIITKIAASPFVIVLYFNTAFFNPFKTLYENEKKKAKKNLKLTRENASLSIRKMHQYSAIIPSGT.

Residues 41-62 (GIITKIAASPFVIVLYFNTAFF) form a helical membrane-spanning segment.

The protein resides in the membrane. This is an uncharacterized protein from Saccharomyces cerevisiae (strain ATCC 204508 / S288c) (Baker's yeast).